We begin with the raw amino-acid sequence, 122 residues long: Ribosome-binding factor A (122 aa).

It belongs to the RbfA family. In terms of assembly, monomer. Binds 30S ribosomal subunits, but not 50S ribosomal subunits or 70S ribosomes.

It is found in the cytoplasm. One of several proteins that assist in the late maturation steps of the functional core of the 30S ribosomal subunit. Associates with free 30S ribosomal subunits (but not with 30S subunits that are part of 70S ribosomes or polysomes). Required for efficient processing of 16S rRNA. May interact with the 5'-terminal helix region of 16S rRNA. The chain is Ribosome-binding factor A from Caldanaerobacter subterraneus subsp. tengcongensis (strain DSM 15242 / JCM 11007 / NBRC 100824 / MB4) (Thermoanaerobacter tengcongensis).